The chain runs to 561 residues: Sperm-tail PG-rich repeat-containing protein 2 (561 aa).

STPGR repeat units lie at residues 21–34, 63–72, and 97–104; these read VGPG…PKQQ, PGPAHYNVSQ, and GPGPGSYN. The tract at residues 123–143 is disordered; that stretch reads PAVSRNIDIPSIPSSGKSHGY. 7 STPGR repeats span residues 164–191, 200–210, 250–285, 292–299, 334–367, 421–438, and 471–481; these read GPAY…NATG, GPGPGQYDIIQ, PGPG…TERF, TPAPGTYN, LPGP…FGSS, LPAP…MSQV, and GPGPATYSPVL.

This Mus musculus (Mouse) protein is Sperm-tail PG-rich repeat-containing protein 2 (Stpg2).